We begin with the raw amino-acid sequence, 841 residues long: Toll-like receptor 4 (841 aa).

An N-terminal signal peptide occupies residues 1–23 (MIPRIRLAVATIPAMAFLSCLRS). At 24–632 (ESWDPCVQVV…FRNATCQISE (609 aa)) the chain is on the extracellular side. Residues Cys-29 and Cys-40 are joined by a disulfide bond. Residue Asn-35 is glycosylated (N-linked (GlcNAc...) asparagine). 7 LRR repeats span residues 55–76 (SVKILDLSFNYLSHLDSNSFSS), 79–100 (ELQVLDLSRCEIQTIDDDAYQG), 103–124 (YLSTLILTGNPIQSLALGAFSG), 127–148 (SLQKLVAVETNLASLEDFPIGH), 151–172 (TLNELNVAHNHIHSFKLPEYFS), 176–197 (NLEHLDLSKNKIENIYHEHLQV), and 205–225 (NLSLDLSLNPLNFIEPGAFNK). Residues Asn-205, Asn-238, Asn-282, and Asn-309 are each glycosylated (N-linked (GlcNAc...) asparagine). A disulfide bridge connects residues Cys-281 and Cys-306. LRR repeat units lie at residues 374 to 395 (NLQFLDLSGNHLSFKGCCSHNE), 400 to 422 (KLKHLDLSFNEIITMKSNFMGLE), 423 to 444 (QLEYLDFQHSSLKQANDFSIFL), 448 to 469 (NLHYLDISYTNIHVVFRGIFAG), 472 to 495 (SLQTLKMAGNSFQNNLLPDVFTDL), 497 to 518 (NLILLDLSKCQLEQVSQRAFHS), 521 to 542 (RLQVLNMSHNRLLFLDTLPYKP), and 545 to 568 (SLRILDCSYNLIVASKEQELQHLP). Cys-390 and Cys-391 are disulfide-bonded. Asn-526 is a glycosylation site (N-linked (GlcNAc...) asparagine). The N-linked (GlcNAc...) asparagine glycan is linked to Asn-575. Residues 579-630 (NDFSCACEHQTFLQWVKDQKQLLVGAEQMVCTQPLEMQDLPVLSFRNATCQI) enclose the LRRCT domain. Cystine bridges form between Cys-583–Cys-609 and Cys-585–Cys-628. Residue Asn-625 is glycosylated (N-linked (GlcNAc...) asparagine). Residues 633–653 (AVISASVLTFLLVSVAGILVY) traverse the membrane as a helical segment. Residues 654-841 (KFYFHLLLFV…SNQHDTTAFT (188 aa)) lie on the Cytoplasmic side of the membrane. Residues 673-816 (STYDAFVIYS…IFWRRLKKAL (144 aa)) form the TIR domain.

The protein belongs to the Toll-like receptor family. In terms of assembly, belongs to the lipopolysaccharide (LPS) receptor, a multi-protein complex containing at least CD14, LY96 and TLR4. Binding to bacterial LPS leads to homodimerization. Interacts with LY96 via the extracellular domain. Interacts with MYD88 and TIRAP via their respective TIR domains. Interacts with NOX4. Interacts with CNPY3 and HSP90B1; this interaction is required for proper folding in the endoplasmic reticulum. Interacts with MAP3K21; this interaction leads to negative regulation of TLR4 signaling. Interacts with CD36, following CD36 stimulation by oxLDL or amyloid-beta 42, and forms a heterodimer with TLR6. The trimeric complex is internalized and triggers inflammatory response. LYN kinase activity facilitates TLR4-TLR6 heterodimerization and signal initiation. Interacts with TICAM1 in response to LPS in a WDFY1-dependent manner. Interacts with WDFY1 in response to LPS. Interacts with SMPDL3B. Interacts with CEACAM1; upon lipopolysaccharide stimulation, forms a complex including TLR4 and the phosphorylated form of SYK and CEACAM1, which in turn, recruits PTPN6 that dephosphorylates SYK, reducing the production of reactive oxygen species (ROS) and lysosome disruption, which in turn, reduces the activity of the inflammasome. Interacts with RFTN1; the interaction occurs in response to lipopolysaccharide stimulation. Interacts with SCIMP; the interaction occurs in response to lipopolysaccharide stimulation and is enhanced by phosphorylation of SCIMP by LYN. This interaction facilitates the phosphorylation of TLR4 by LYN which elicits a selective cytokine response in macrophages. Interacts with TRAF3IP3. Interacts with TREM1; this interaction enhances TLR4-mediated inflammatory response. Interacts with ZG16B/PAUF. Interacts with CD82; this interaction inhibits TLR4-mediated signaling pathway. Post-translationally, phosphorylated on tyrosine residues by LYN after binding lipopolysaccharide. Ubiquitinated by RNF128 via 'Lys-28'-linked polyubiquitin chains, leading to proteasomal degradation.

Its subcellular location is the cell membrane. The protein localises to the early endosome. The protein resides in the cell projection. It localises to the ruffle. Functionally, transmembrane receptor that functions as a pattern recognition receptor recognizing pathogen- and damage-associated molecular patterns (PAMPs and DAMPs) to induce innate immune responses via downstream signaling pathways. At the plasma membrane, cooperates with LY96 to mediate the innate immune response to bacterial lipopolysaccharide (LPS). Also involved in LPS-independent inflammatory responses triggered by free fatty acids, such as palmitate, and Ni(2+). Mechanistically, acts via MYD88, TIRAP and TRAF6, leading to NF-kappa-B activation, cytokine secretion and the inflammatory response. Alternatively, CD14-mediated TLR4 internalization via endocytosis is associated with the initiation of a MYD88-independent signaling via the TICAM1-TBK1-IRF3 axis leading to type I interferon production. In addition to the secretion of proinflammatory cytokines, initiates the activation of NLRP3 inflammasome and formation of a positive feedback loop between autophagy and NF-kappa-B signaling cascade. In complex with TLR6, promotes inflammation in monocytes/macrophages by associating with TLR6 and the receptor CD86. Upon ligand binding, such as oxLDL or amyloid-beta 42, the TLR4:TLR6 complex is internalized and triggers inflammatory response, leading to NF-kappa-B-dependent production of CXCL1, CXCL2 and CCL9 cytokines, via MYD88 signaling pathway, and CCL5 cytokine, via TICAM1 signaling pathway. In myeloid dendritic cells, vesicular stomatitis virus glycoprotein G but not LPS promotes the activation of IRF7, leading to type I IFN production in a CD14-dependent manner. The sequence is that of Toll-like receptor 4 (TLR4) from Sus scrofa (Pig).